The chain runs to 3419 residues: MAKYGHLEASPDDGQNQFSDIIKSRSDEHNDVQKKTFTKWINARFSKSGKPPINDMFSDLKDGRKLLDLLEGLTGTSLPKERGSTRVHALNNVNRVLQVLHQNNVELVNIGGTDIVDGNPKLTLGLLWSIILHWQVKDVMKDIMSDLQQTNSEKILLSWVRQTTRPYSQVNVLNFTTSWTDGLAFNAVLHRHKPDLFSWDRVVKMSPTERLEHAFSKAHTYLGIEKLLDPEDVAVQLPDKKSIIMYLTSLFEVLPQQVTIDAIREVETLPRKYKKECEGEEINIQSAVLTEEGQSPRAETPSTVTEVDMDLDSYQIALEEVLTWLLSAEDTFQEQDDISDDVEDVKEQFATHETFMMELTAHQSSVGSVLQAGNQLMTQGTLSDEEEFEIQEQMTLLNARWEALRVESMERQSRLHDALMELQKKQLQQLSGWLTLTEERIQKMESLPVGDDLPSLQNLLEEHKSLQSDLEAEQVKVNSLTHMVVIVDENSGESATAVLEDQLQKLGERWTAVCRWTEERWNRLQEINILWQELLEEQCLLEAWLTEKEEALNKVQTGNFKDQKELGVSVRRLAILKEDMEMKRQTLDQLSEIGQDVGQLLSNPKASEKMNSDSEELTQRWDSLVQRLEDSSNQVTQAVAKLGMSQIPQKDLLETVHVREQGMIKKPKQELPPPPPPKKRQIHVDVEAKKKFDATSAELQSWILRSKAALQNTEMNEYKKSQETSGVRKKWKGLEKEQKEKIPQLDELNQTGQILQEQMGKEGLLAEEINDVLERVLLEWKMISQQLEDLGRKIQLQEDINAYFRQLDALEKTIRAKEEWLRDASFSESPQRSLPSLKDSCQRELTDLLGLHPRIEILCASCSALRSQPSVPGFVQQGFDDLRRHYQAVQKALEEYQQQLENELKSQPEPAYLDTLNTLKKMLSESEKAAQASLSALNDPSAVEQALQEKKALDETLENQKPTLHKLSEETKALEKNMLPDVGKTYRQEFDDAQGKWNKVKTKVSRDLRSLEEIIPRLRDFKADSEVIEKWTNGVKDFLMKEQAAQGDTTALQRQLDQCTTFANEIETIESSLKNLRDIETSLQRCPVTGVKTWVQTRLADYQSQLEKFSQEIDIQKSRLSDSQEKAMNLKKDLAEMQEWMAQAEEDYLERDFEYKSPEELESAVEEMKRAKEDVLQKEVRVKILKDSIKLVAARVPSGGQELTSEFNEVLESYQLLCNRIRGKCHTLEEVWSCWVELLHYLDLETSWLNTLEERMQSTEALPERAEAVHDALESLESVLRHPADNRTQIRELGQTLIDGGILDDIISEKLEAFNSRYEELSHLAESKQISLEKQLQVLRETDHMLQVLKESLGELDKQLTTYLTDRIDAFQLPQEAQKIQAEISAHELTLEELKKNVRPQPPTSPEGRTTRGGSQMDLLQRKLREVSTKFQLFQKPANFEQRMLDCKRVLDGVKAELHVLSVKDVDPDVIQTHLDKCMKLYKTLSEVKLEVETVIKTGRHIVQKQQTDNPKGMDEQLTSLKVLYNDLGAQVTEGKQDLERASQLSRKLKKEAAILSEWLSTTEAELVQKSTSEGVIGDLDTEISWAKNILKDLERRKVDLNAITESSAALQHLVVGSESVLEDTLCVLNAGWSRVRTWTEDWRNTLLNHQNQLEVFDGHVAHISTWLYQAEALLDEIEKKPASKQEEIVKRLLSELSDASIQVENVREQAIVLVNARGSSSRELVEPKLAELSKNFEKVSQHINSAQMLIGQDPAGTVEAVGPFSDLESLESDIENMLKVVEKHLDPSNDEKMDEERAQIEEVLQRGEHLLHEPMEDSKKEKIRLQLLLLHTRYNKIKAIPQRKTIPLSSGIMSSALPADYLVEINKILLTLDDIELSLNIPELNTTVYEDFSFQEDSLKRIKDQLDRLGEQLAAVHEKQPDVILEASGPEAIQIRDMLSQLNAKWDRVNRLYSDRRGSFARAVEEWKQFHCDLDDLTQWLSEAEDLLVGTCAPDGSLDLEKARTHQLELEDGLSSHQPCLIDVNQKGEDIVQRLRPSDASFLKDKLASLNQRWSALVAEVKDLQPRLKGESKQVSGYRKRLDEVVCWLTKVENAVQKRSTPDPEENPWELTDLAQEMDAQAENIKWLNRAELEMLSDKNLSLCERDNLSESLRNVNTMWTKICREVPSLLKTRTQDPCSAPQTRIAAHPNVQKVALVSSASDAPLRGPEISVPADLDKTITELADWLVLIDQMLKSNIVTVGDVKEINKTVSRMKITKADLEQRHPQLDFVFTLAQNLKNKASSSDLRTAITEKLEKLKTQWESTQHGVELRRQQLEDMVVDSLQWDDHREETEELMRKHEARFYMLQQARRDPLSKQVSDNQLLLQELGSGDGVIMAFDNVLQKLLEEYSSDDTRNVEETTEYLKTSWINLKQSIADRQSALEAELRTVQTSRRDLENFVKWLQEAETTANVLADASQRENALQDSVLARQLRQQMLDIQAEIDAHNDIFKSIDGNRQKMVKALGNSEEATMLQHRLDDMNQRWNDLKAKSASIRAHLEASAEKWNRLLASLEELIKWLNMKDEELKKQMPIGGDVPALQLQYDHCKVLRRELKEKEYSVLNAVDQARVFLADQPIEAPEEPRRNPQSKTELTPEERAQKIAKAMRKQSSEVREKWESLNAVTSTWQKQVGKALEKLRDLQGAVDDLDADMKEVEAVRNGWKPVGDLLIDSLQDHIEKTLAFREEIAPINLKVKTMNDLSSQLSPLDLHPSPKMSRQLDDLNMRWKLLQVSVEDRLKQLQEAHRDFGPSSQHFLSTSVQLPWQRSISHNKVPYYINHQTQTTCWDHPKMTELFQSLGDLNNVRFSAYRTAIKIRRLQKALCLDLLELNTTNEVFKQHKLNQNDQLLSVPDVINCLTTTYDGLEQLHKDLVNVPLCVDMCLNWLLNVYDTGRTGKIRVQSLKIGLMSLSKGLLEEKYRCLFKEVAGPTEMCDQRQLGLLLHDAIQIPRQLGEVAAFGGSNIEPSVRSCFQQNNNKPEISVKEFIDWMRLEPQSMVWLPVLHRVAAAETAKHQAKCNICKECPIVGFRYRSLKHFNYDVCQSCFFSGRTAKGHKLHYPMVEYCIPTTSGEDVRDFTKVLKNKFRSKKYFAKHPRLGYLPVQTVLEGDNLETPITLISMWPEHYDPSQSPQLFHDDTHSRIEQYATRLAQMERTNGSFLTDSSSTTGSVEDEHALIQQYCQTLGGESPVSQPQSPAQILKSVEKEERGELERIIADLEEEQRNLQVEYEQLKEQHLRRGLPLGSPPDSIVSPYHTSEDSELIAEAKLLRQHKGRLEARMQILEDHNKQLESQLHRLRQLLEQPDSDSRINGVSPWASPQHPSLSYSLDPDPGPQSHQAASEDLLAPPHDTSTDLTDVMEQLNSTFPSCSPNVPSRPQAI.

The tract at residues M1–Y246 is actin-binding. At Y4 the chain carries Phosphotyrosine. S10 is modified (phosphoserine). 2 Calponin-homology (CH) domains span residues D31–Q135 and T150–P255. Residues T268 to K905 form an interaction with SYNM region. S295 bears the Phosphoserine mark. Spectrin repeat units follow at residues D312–H416, E421–Q525, Q532–T636, K690–Q795, N801–E901, P910–E1012, R1019–S1121, M1128–E1229, V1236–E1333, Q1335–K1436, A1438–E1540, R1547–L1648, Q1653–A1747, Q1748–A1840, I1841–R1958, K1969–K2070, and S2077–T2176. Residues L1336–A1761 form an interaction with SYNM region. S1998 carries the post-translational modification Phosphoserine. Phosphoserine is present on S2201. 5 Spectrin repeats span residues A2216–E2319, E2336–E2426, Q2433–E2542, N2549–G2674, and R2681–Q2783. A disordered region spans residues D2616–R2640. The interval A2785–T3152 is interaction with SYNM. The WW domain occupies T2799–M2832. The segment at K3052–T3108 adopts a ZZ-type; degenerate zinc-finger fold. Zn(2+)-binding residues include C3057, C3060, C3081, and C3084. Disordered stretches follow at residues R3277–S3296 and D3344–T3395. The residue at position 3284 (S3284) is a Phosphoserine.

Homodimer. Interacts with the syntrophins SNTA1; SNTB1 and SNTB2. Interacts with SYNM. Interacts (via its WWW and ZZ domains) with DAG1 (via the PPXY motif of betaDAG1); the interaction is inhibited by the tyrosine phosphorylation of the PPXY motif of DAG1. Interacts with DTNB. Interacts with PGM5.

The protein resides in the postsynaptic cell membrane. Its subcellular location is the cytoplasm. It localises to the cytoskeleton. Its function is as follows. May play a role in anchoring the cytoskeleton to the plasma membrane. The sequence is that of Utrophin from Rattus norvegicus (Rat).